The following is an 87-amino-acid chain: Small ribosomal subunit protein bS20 (87 aa).

Residues 1–22 (MANSAGSKKRARQAVKSRAHNG) are disordered. A compositionally biased stretch (basic residues) spans 7-19 (SKKRARQAVKSRA).

This sequence belongs to the bacterial ribosomal protein bS20 family.

Its function is as follows. Binds directly to 16S ribosomal RNA. The chain is Small ribosomal subunit protein bS20 from Marinomonas sp. (strain MWYL1).